The primary structure comprises 362 residues: GTP 3',8-cyclase (362 aa).

The 221-residue stretch at 8–228 (SLGRPLRDLR…ARISSHWPID (221 aa)) folds into the Radical SAM core domain. Arg17 lines the GTP pocket. Positions 24 and 28 each coordinate [4Fe-4S] cluster. Tyr30 contacts S-adenosyl-L-methionine. Cys31 provides a ligand contact to [4Fe-4S] cluster. Position 71 (Arg71) interacts with GTP. S-adenosyl-L-methionine is bound at residue Gly75. Position 102 (Thr102) interacts with GTP. S-adenosyl-L-methionine is bound at residue Ser126. GTP is bound at residue Lys164. Met198 contributes to the S-adenosyl-L-methionine binding site. [4Fe-4S] cluster contacts are provided by Cys262 and Cys265. 267 to 269 (RLR) lines the GTP pocket. Cys279 provides a ligand contact to [4Fe-4S] cluster. The disordered stretch occupies residues 325 to 362 (ALDSDGSREDADESEASAVPGRSTHPGHRKVEMSYIGG).

This sequence belongs to the radical SAM superfamily. MoaA family. As to quaternary structure, monomer and homodimer. Requires [4Fe-4S] cluster as cofactor.

It catalyses the reaction GTP + AH2 + S-adenosyl-L-methionine = (8S)-3',8-cyclo-7,8-dihydroguanosine 5'-triphosphate + 5'-deoxyadenosine + L-methionine + A + H(+). It participates in cofactor biosynthesis; molybdopterin biosynthesis. In terms of biological role, catalyzes the cyclization of GTP to (8S)-3',8-cyclo-7,8-dihydroguanosine 5'-triphosphate. The chain is GTP 3',8-cyclase from Acidothermus cellulolyticus (strain ATCC 43068 / DSM 8971 / 11B).